The following is a 1017-amino-acid chain: Pikachurin (1017 aa).

Positions 1-24 are cleaved as a signal peptide; the sequence is MDLIRGVLLRLLLLASSLGPGAVS. 2 Fibronectin type-III domains span residues 37-136 and 144-239; these read PPLD…TLSQ and APQQ…TLCP. The N-linked (GlcNAc...) asparagine glycan is linked to N47. One can recognise an EGF-like 1 domain in the interval 343–381; that stretch reads FDMPCDETLCSADSFCVNDYTWGGSRCQCTLGKGGESCS. Cystine bridges form between C347/C358, C352/C369, C371/C380, C534/C564, C569/C580, C574/C590, C592/C601, C788/C799, C793/C808, C810/C819, and C987/C1014. The Laminin G-like 1 domain occupies 386-564; sequence IQYPQFFGHS…ALSGADVGEC (179 aa). 2 EGF-like domains span residues 565 to 602 and 784 to 820; these read SSGI…RHCE and AAHP…LHCQ. Positions 609-788 constitute a Laminin G-like 2 domain; the sequence is IPQFRESLRS…VNVENAAHPC (180 aa). Positions 835–1014 constitute a Laminin G-like 3 domain; that stretch reads IEIPQFIGRS…AVDGKNINTC (180 aa).

In terms of assembly, interacts with DAG1 alpha-dystroglycan. Interacts with GPR158 and GPR179; transsynaptic interaction is required for synaptic organization of photoreceptor cells. O-glycosylated; contains chondroitin sulfate and heparan sulfate.

It localises to the secreted. The protein localises to the extracellular space. The protein resides in the extracellular matrix. Its subcellular location is the synaptic cleft. It is found in the presynaptic active zone. Involved in both the retinal photoreceptor ribbon synapse formation and physiological functions of visual perception. Plays a key role in the synaptic organization of photoreceptors by mediating transsynaptic interaction between alpha-dystroglycan and GPR179 on the postsynaptic membrane. Necessary for proper bipolar dendritic tip apposition to the photoreceptor ribbon synapse. Promotes matrix assembly and cell adhesiveness. In Homo sapiens (Human), this protein is Pikachurin (EGFLAM).